The primary structure comprises 254 residues: Splicing factor tls1 (254 aa).

Positions 69 to 83 are enriched in basic and acidic residues; sequence KEKQLNTANEPHEAN. Disordered regions lie at residues 69–90 and 195–216; these read KEKQ…SAQS and RKRQ…LRTS. A compositionally biased stretch (basic residues) spans 195-204; the sequence is RKRQKKRARM. Residues 205 to 216 show a composition bias toward basic and acidic residues; it reads KEKLDSKALRTS.

This sequence belongs to the TLS1 family. Component of the spliceosome. Interacts with brr2.

It is found in the cytoplasm. Its subcellular location is the nucleus. Plays a role in pre-mRNA splicing by facilitating excision of introns featuring long spacing between the branchpoint and 3'-splice site. Assists the splicing of several components involved in chromatin organization, such as several shelterin complex subunits. This is Splicing factor tls1 from Schizosaccharomyces pombe (strain 972 / ATCC 24843) (Fission yeast).